Here is a 418-residue protein sequence, read N- to C-terminus: uncharacterized protein (418 aa).

Residues 282-297 (EEHSSIAKLDSEEKIR) show a composition bias toward basic and acidic residues. A disordered region spans residues 282–346 (EEHSSIAKLD…SASVDDVSEE (65 aa)). Over residues 304 to 316 (SSTSLSPDPTSDN) the composition is skewed to low complexity. The span at 322-337 (WVSSQDTSKNSSNLAS) shows a compositional bias: polar residues.

This is an uncharacterized protein from Schizosaccharomyces pombe (strain 972 / ATCC 24843) (Fission yeast).